A 222-amino-acid chain; its full sequence is Ribose-5-phosphate isomerase A (222 aa).

Substrate is bound by residues 29–32 (TGST), 82–85 (DSAD), and 95–98 (KGGG). The active-site Proton acceptor is E104. K122 provides a ligand contact to substrate.

Belongs to the ribose 5-phosphate isomerase family. In terms of assembly, homodimer.

The enzyme catalyses aldehydo-D-ribose 5-phosphate = D-ribulose 5-phosphate. The protein operates within carbohydrate degradation; pentose phosphate pathway; D-ribose 5-phosphate from D-ribulose 5-phosphate (non-oxidative stage): step 1/1. Functionally, catalyzes the reversible conversion of ribose-5-phosphate to ribulose 5-phosphate. This Blochmanniella floridana protein is Ribose-5-phosphate isomerase A.